The primary structure comprises 114 residues: MGSRPCDLGLFCCCSSCFCLCCPRHRPVSRLAAVVGGAAAVPAVVSGVTGLILSPSQSPIFIQPTPSPPMSPLRPGLDLVFANQPDHSAPLGVTRPSAPPLPHVVDLPQLGPRR.

Hydrophobic stretches follow at residues 6–22 and 33–53; these read CDLG…CLCC and AVVG…GLIL. Positions 28-68 are interaction with host HPX; it reads VSRLAAVVGGAAAVPAVVSGVTGLILSPSQSPIFIQPTPSP. Positions 48–72 are interaction with the capsid protein; sequence VTGLILSPSQSPIFIQPTPSPPMSP. Ser71 bears the Phosphoserine; by host mark. The interval 72–114 is homodimerization, and interaction with host AMBP/bikunin; sequence PLRPGLDLVFANQPDHSAPLGVTRPSAPPLPHVVDLPQLGPRR. Residues 91 to 114 form a disordered region; it reads LGVTRPSAPPLPHVVDLPQLGPRR. Residues 95-104 are interaction with host SRC, HCK, FYN, PIK3R3 and GRB2; it reads RPSAPPLPHV. Residues 96-99 carry the PTAP/PSAP motif motif; sequence PSAP.

Belongs to the hepevirus ORF3 protein family. As to quaternary structure, forms homooligomers. Interacts with host SRC, HCK, FYN, PIK3R3 and GRB2 (via SH3 domain); binding does not activate the kinases. Interacts with host AMBP/bikunin and AMBP/alpha-1-microglobulin peptides. Interacts with host HPX/hemopexin. Interacts (when phosphorylated) with capsid protein ORF2. Interacts with host TSG101; this interaction plays a role in viral release from the host cell. Interacts with host SIRPA; this interaction down-regulates the phosphorylation of host IRF3. In terms of processing, palmitoylated in the N-terminus.

The protein resides in the host endoplasmic reticulum membrane. It is found in the host cytoplasm. The protein localises to the host cytoskeleton. It localises to the virion. Its subcellular location is the host cell membrane. Its function is as follows. Small multifunctional phosphoprotein involved in virion morphogenesis, egress and counteracting host innate immunity. Plays critical roles in the final steps of viral release by interacting with host TSG101, a member of the vacuolar protein-sorting pathway and using other cellular host proteins involved in vesicle formation pathway. Also acts as a viroporin and forms ion conductive pores allowing viral particle release. Impairs the generation of type I interferon by down-regulating host TLR3 and TLR7 as well as their downstream signaling pathways. Down-regulates the phosphorylation of host IRF3 via the interaction with host SIRP-alpha, thereby inhibiting IFN-I expression. Interacts with host microtubules. In Homo sapiens (Human), this protein is Protein ORF3.